The sequence spans 408 residues: RNA-splicing ligase RtcB (408 aa).

Residues Asp-75, Cys-78, His-168, His-185, and His-281 each coordinate Mn(2+). 167 to 171 is a GMP binding site; that stretch reads NHFIE. GMP is bound by residues 281 to 282, 313 to 316, Ser-320, 337 to 340, and Lys-407; these read HN, PGSM, and HGAG. The active-site GMP-histidine intermediate is the His-337.

Belongs to the RtcB family. Monomer. Requires Mn(2+) as cofactor.

It carries out the reaction a 3'-end 3'-phospho-ribonucleotide-RNA + a 5'-end dephospho-ribonucleoside-RNA + GTP = a ribonucleotidyl-ribonucleotide-RNA + GMP + diphosphate. It catalyses the reaction a 3'-end 2',3'-cyclophospho-ribonucleotide-RNA + a 5'-end dephospho-ribonucleoside-RNA + GTP + H2O = a ribonucleotidyl-ribonucleotide-RNA + GMP + diphosphate + H(+). Functionally, GTP-dependent RNA ligase that is involved in RNA repair. Joins RNA with 2',3'-cyclic-phosphate or 3'-phosphate ends to RNA with 5'-hydroxy ends. Also acts as a DNA ligase in case of DNA damage by splicing 'dirty' DNA breaks, characterized by 3'-phosphate (or cyclic-phosphate) and 5'-hydroxy ends that cannot be sealed by classical DNA ligases. Repairs tRNA cleaved by colicins D or E5, does not repair damaged 16S rRNA. Able to catalyze tRNA splicing in vivo in yeast, but bacteria are not known to splice tRNA. The protein is RNA-splicing ligase RtcB of Escherichia coli (strain K12).